The primary structure comprises 790 residues: Phenylalanine--tRNA ligase beta subunit (790 aa).

In terms of domain architecture, tRNA-binding spans 39 to 154; it reads PDSLNTVVTG…ADTPLGESAC (116 aa). Residues 404–483 enclose the B5 domain; that stretch reads FSPLSLSVRP…FVQKTQKILP (80 aa). Residues Asp-457, Asp-463, Glu-466, and Glu-467 each contribute to the Mg(2+) site. An FDX-ACB domain is found at 694-790; that stretch reads PIYPASSRDI…KLANIGQGNS (97 aa).

The protein belongs to the phenylalanyl-tRNA synthetase beta subunit family. Type 1 subfamily. Tetramer of two alpha and two beta subunits. Mg(2+) serves as cofactor.

The protein resides in the cytoplasm. It carries out the reaction tRNA(Phe) + L-phenylalanine + ATP = L-phenylalanyl-tRNA(Phe) + AMP + diphosphate + H(+). The polypeptide is Phenylalanine--tRNA ligase beta subunit (pheT) (Chlamydia trachomatis serovar D (strain ATCC VR-885 / DSM 19411 / UW-3/Cx)).